A 387-amino-acid chain; its full sequence is Probable WRKY transcription factor 36 (387 aa).

A DNA-binding region (WRKY) is located at residues 197 to 264 (CEDPSINDGC…YEGNHDHPLP (68 aa)). Residues 322–366 (RPNYPNQLPDDYPLSSSSFSLNFSSPDPPPPSSHDHTLNFSGLRT) are disordered. The segment covering 329–346 (LPDDYPLSSSSFSLNFSS) has biased composition (low complexity).

Its subcellular location is the nucleus. In terms of biological role, transcription factor. Interacts specifically with the W box (5'-(T)TGAC[CT]-3'), a frequently occurring elicitor-responsive cis-acting element. The protein is Probable WRKY transcription factor 36 (WRKY36) of Arabidopsis thaliana (Mouse-ear cress).